The primary structure comprises 364 residues: Threonine-phosphate decarboxylase (364 aa).

O-phospho-L-threonine is bound by residues 8–9 (HG), N32, and N157. K216 bears the N6-(pyridoxal phosphate)lysine mark. 2 residues coordinate O-phospho-L-threonine: R323 and R337.

The protein belongs to the class-II pyridoxal-phosphate-dependent aminotransferase family. As to quaternary structure, homodimer. It depends on pyridoxal 5'-phosphate as a cofactor.

The enzyme catalyses O-phospho-L-threonine + H(+) = (R)-1-aminopropan-2-yl phosphate + CO2. It participates in cofactor biosynthesis; adenosylcobalamin biosynthesis. Its function is as follows. Decarboxylates L-threonine-O-3-phosphate to yield (R)-1-amino-2-propanol O-2-phosphate, the precursor for the linkage between the nucleotide loop and the corrin ring in cobalamin. The chain is Threonine-phosphate decarboxylase (cobD) from Salmonella typhimurium (strain LT2 / SGSC1412 / ATCC 700720).